Here is a 604-residue protein sequence, read N- to C-terminus: 3-hydroxy-3-methylglutaryl-coenzyme A reductase (604 aa).

A disordered region spans residues 1–31; the sequence is MDVRRRSEKPAYPTKEFAAGEKPLKPHKQQQ. 2 helical membrane-spanning segments follow: residues 40 to 62 and 90 to 110; these read ASDA…FFSV and AIAS…IGFV. Residues 111–189 are linker; the sequence is QSFVSRDNND…PLVTPAASEE (79 aa). The segment at 190–604 is catalytic; sequence DEEIIKSVVQ…STKDVTKASS (415 aa). Glu283 serves as the catalytic Charge relay system. The N-linked (GlcNAc...) asparagine glycan is linked to Asn347. Residue Lys415 is the Charge relay system of the active site. Asn460 carries N-linked (GlcNAc...) asparagine glycosylation. Asp491 acts as the Charge relay system in catalysis. The active-site Proton donor is His589. Asn593 carries N-linked (GlcNAc...) asparagine glycosylation.

Belongs to the HMG-CoA reductase family. Found in protoplasts and leaves submitted to stress. Low levels found in apexes, anthers and roots.

It is found in the endoplasmic reticulum membrane. It carries out the reaction (R)-mevalonate + 2 NADP(+) + CoA = (3S)-3-hydroxy-3-methylglutaryl-CoA + 2 NADPH + 2 H(+). The protein operates within metabolic intermediate biosynthesis; (R)-mevalonate biosynthesis; (R)-mevalonate from acetyl-CoA: step 3/3. Catalyzes the synthesis of mevalonate, the specific precursor of all isoprenoid compounds present in plants. Possible role in plant defense mechanisms as well as in the cell cycle. The sequence is that of 3-hydroxy-3-methylglutaryl-coenzyme A reductase (HMGR) from Nicotiana sylvestris (Wood tobacco).